Consider the following 271-residue polypeptide: Octanoyltransferase LipM (271 aa).

A BPL/LPL catalytic domain is found at Gly31–Phe242. Cys144 serves as the catalytic Acyl-thioester intermediate.

The protein belongs to the octanoyltransferase LipM family. As to quaternary structure, monomer.

The enzyme catalyses octanoyl-[ACP] + L-lysyl-[protein] = N(6)-octanoyl-L-lysyl-[protein] + holo-[ACP] + H(+). Its pathway is protein modification; protein lipoylation via endogenous pathway; protein N(6)-(lipoyl)lysine from octanoyl-[acyl-carrier-protein]. In terms of biological role, catalyzes the transfer of endogenously produced octanoic acid from octanoyl-acyl-carrier-protein onto the lipoyl domain of GcvH, an intermediate carrier during protein lipoylation. The chain is Octanoyltransferase LipM from Clostridioides difficile (strain 630) (Peptoclostridium difficile).